The following is a 355-amino-acid chain: MSLCTLEINISAIKNNYLLLQGICKTSLVGAAVKANGYGLGAVQISKALIKENCRYFFVATSEEGVNLRKALGLDVDILVLNGVFEHDALELIEYNLTPVLNNLKQIEIWQKFSNLKHRLLPCYLHFNTGINRLGLSSDEIEQLINDRDLLKGLDLQYIISHLAISEEIDNPYNLEQLNIFKAYLQYFPNVKASLANSGGIFLGQDYHFDLARPGAALYGLNPVMKNPVTLKAPIIHLQNLTLDSHIGYNMTFTTKRDSVIATLPLGYADGFSRNFSNQGEVFINGRSVPIVGRISMDLINIDVTDLPPLDIFLGQEAEIIGNYCTPDKIASIIGTIGYEVLTSLGSRYKRIYIE.

The active-site Proton acceptor; specific for D-alanine is Lys-34. N6-(pyridoxal phosphate)lysine is present on Lys-34. Arg-133 is a substrate binding site. Catalysis depends on Tyr-249, which acts as the Proton acceptor; specific for L-alanine. Met-297 is a binding site for substrate.

This sequence belongs to the alanine racemase family. The cofactor is pyridoxal 5'-phosphate.

The catalysed reaction is L-alanine = D-alanine. Its pathway is amino-acid biosynthesis; D-alanine biosynthesis; D-alanine from L-alanine: step 1/1. In terms of biological role, catalyzes the interconversion of L-alanine and D-alanine. May also act on other amino acids. In Rickettsia akari (strain Hartford), this protein is Alanine racemase (alr).